A 365-amino-acid polypeptide reads, in one-letter code: 3-isopropylmalate dehydrogenase (365 aa).

80 to 91 is a binding site for NAD(+); it reads GPKWGTGSVRPE. Arg-98, Arg-108, Arg-137, and Asp-226 together coordinate substrate. Asp-226, Asp-251, and Asp-255 together coordinate Mg(2+). Residue 290-301 participates in NAD(+) binding; sequence GSAPDLPKGKVN.

Belongs to the isocitrate and isopropylmalate dehydrogenases family. As to quaternary structure, homodimer. Mg(2+) is required as a cofactor. The cofactor is Mn(2+).

It localises to the cytoplasm. It catalyses the reaction (2R,3S)-3-isopropylmalate + NAD(+) = 4-methyl-2-oxopentanoate + CO2 + NADH. The protein operates within amino-acid biosynthesis; L-leucine biosynthesis; L-leucine from 3-methyl-2-oxobutanoate: step 3/4. Functionally, catalyzes the oxidation of 3-carboxy-2-hydroxy-4-methylpentanoate (3-isopropylmalate) to 3-carboxy-4-methyl-2-oxopentanoate. The product decarboxylates to 4-methyl-2 oxopentanoate. The chain is 3-isopropylmalate dehydrogenase (LEU2) from Maudiozyma exigua (Yeast).